Reading from the N-terminus, the 96-residue chain is MTAAHGYTQQKDNYAKRLRRVEGQVRGIARMIEEDKYCIDVLTQISAVTSALRSVALNLLDEHLSHCVTRAVAEGGPGADGKLAEASAAIARLVRS.

Thr2 carries the N-acetylthreonine modification. The Cu cation site is built by Cys38, His63, and Cys67.

It belongs to the CsoR family.

It is found in the cytoplasm. Under low copper conditions, represses the expression of lpqS, Rv2963, mymT, socA, socB, mmcO and its own expression. In the presence of copper, RicR dissociates from DNA, leading to the expression of the target genes. Members of the RicR regulon are important for copper resistance during infections and full virulence in a mouse model of infection. The sequence is that of Copper-sensing transcriptional repressor RicR from Mycobacterium tuberculosis (strain ATCC 25618 / H37Rv).